An 860-amino-acid polypeptide reads, in one-letter code: GPI ethanolamine phosphate transferase 2 (860 aa).

Asn123 and Asn180 each carry an N-linked (GlcNAc...) asparagine glycan. Helical transmembrane passes span 408–428 (LGGI…FSAL), 438–458 (LYLI…TVEE), 459–479 (EHQI…ISGS), 487–506 (FNWM…NQTG), 524–544 (NHPV…NKVW), 555–575 (LAFL…ITQA), 576–596 (WEAG…PGTL), and 639–659 (AFLT…LFMV). The N-linked (GlcNAc...) asparagine glycan is linked to Asn672. Helical transmembrane passes span 692 to 712 (LVLV…FSMG), 736 to 756 (FVGV…STAG), 795 to 815 (VYVV…TCFF), and 834 to 854 (FVWT…IFVV).

It belongs to the PIGG/PIGN/PIGO family. PIGG subfamily.

The protein resides in the endoplasmic reticulum membrane. The protein operates within glycolipid biosynthesis; glycosylphosphatidylinositol-anchor biosynthesis. Functionally, ethanolamine phosphate transferase involved in glycosylphosphatidylinositol-anchor biosynthesis. Transfers ethanolamine phosphate to the GPI second mannose. This chain is GPI ethanolamine phosphate transferase 2 (LAS21), found in Yarrowia lipolytica (strain CLIB 122 / E 150) (Yeast).